The primary structure comprises 287 residues: Bifunctional protein FolD (287 aa).

Residues 165–167 (NRS), Ser-190, and Ile-233 contribute to the NADP(+) site.

Belongs to the tetrahydrofolate dehydrogenase/cyclohydrolase family. As to quaternary structure, homodimer.

The enzyme catalyses (6R)-5,10-methylene-5,6,7,8-tetrahydrofolate + NADP(+) = (6R)-5,10-methenyltetrahydrofolate + NADPH. It catalyses the reaction (6R)-5,10-methenyltetrahydrofolate + H2O = (6R)-10-formyltetrahydrofolate + H(+). It participates in one-carbon metabolism; tetrahydrofolate interconversion. Functionally, catalyzes the oxidation of 5,10-methylenetetrahydrofolate to 5,10-methenyltetrahydrofolate and then the hydrolysis of 5,10-methenyltetrahydrofolate to 10-formyltetrahydrofolate. The protein is Bifunctional protein FolD of Nitrosopumilus maritimus (strain SCM1).